Reading from the N-terminus, the 262-residue chain is Thiazole synthase (262 aa).

Catalysis depends on Lys-97, which acts as the Schiff-base intermediate with DXP. 1-deoxy-D-xylulose 5-phosphate is bound by residues Gly-158, 185-186, and 207-208; these read AG and NT. Residues 243–262 are disordered; it reads DKAQASTPTVGQPFWHSAEY.

This sequence belongs to the ThiG family. As to quaternary structure, homotetramer. Forms heterodimers with either ThiH or ThiS.

The protein localises to the cytoplasm. It catalyses the reaction [ThiS sulfur-carrier protein]-C-terminal-Gly-aminoethanethioate + 2-iminoacetate + 1-deoxy-D-xylulose 5-phosphate = [ThiS sulfur-carrier protein]-C-terminal Gly-Gly + 2-[(2R,5Z)-2-carboxy-4-methylthiazol-5(2H)-ylidene]ethyl phosphate + 2 H2O + H(+). It functions in the pathway cofactor biosynthesis; thiamine diphosphate biosynthesis. Functionally, catalyzes the rearrangement of 1-deoxy-D-xylulose 5-phosphate (DXP) to produce the thiazole phosphate moiety of thiamine. Sulfur is provided by the thiocarboxylate moiety of the carrier protein ThiS. In vitro, sulfur can be provided by H(2)S. This Neisseria meningitidis serogroup B (strain ATCC BAA-335 / MC58) protein is Thiazole synthase.